A 407-amino-acid chain; its full sequence is CCCH-type zinc finger protein oma-1 (407 aa).

Residues 1–39 (MNVNGENNEKIDEHHLESSLAGVPTLPVSPLDHAKDLSQ) form a disordered region. Positions 7–17 (NNEKIDEHHLE) are enriched in basic and acidic residues. A required for taf-4 binding region spans residues 46-80 (IGDLVTQTANLIAIKKQLLEDIAFNQHIQSMQVRA). 2 consecutive C3H1-type zinc fingers follow at residues 112–140 (SYKT…HGEE) and 154–182 (KYKT…HPDH). The residue at position 239 (Thr-239) is a Phosphothreonine; by mbk-2 and GSK3. Phosphoserine; by mbk-2 is present on Ser-302. Thr-339 is subject to Phosphothreonine; by GSK3.

In terms of assembly, interacts with taf-4 (via C-terminus). Interacts with ifet-1. Component of a ribonucleoprotein particle complex that interacts with cgh-1 and car-1 in an RNA-dependent manner. Association with many proteins is dependent on the presence of RNA. Phosphorylation by mbk-2 and by gsk-3 are required for its rapid degradation following meiosis II. As to expression, exclusively expressed in the hermaphrodite gonad. Expressed prior to oocyte division. Widely distributed throughout gonadal oocytes from the mitotic stage to the developing diakinesis stage. Expressed in sperm.

It localises to the cytoplasm. The protein resides in the cytoplasmic granule. It is found in the nucleus. In terms of biological role, zinc-finger RNA-binding protein that binds to 5'-UA[AU]-3' motifs in the 3'-UTR of maternal mRNAs to suppress translation in oocytes and embryos. Acts as a ribonucleoprotein particle component that may exert part of its function within cytoplasmic foci of unfertilized oocytes. Acts redundantly with oma-2 to control the temporal expression and distribution of maternal proteins and thereby promote meiotic progression, oocyte maturation, fertilization and embryonic development. Recruits the translational repressor ifet-1 to the 3'-UTR of mei-1 and zif-1 to negatively regulate their translation. By suppressing the translation of the E3 ligase zif-1, may in turn play a role in the stabilization of zif-1 targets such as the maternal transcriptional repressor protein pie-1. Following fertilization, sequesters the transcription initiation factor, taf-4, in the cytoplasm, which prevents its nuclear localization and thus allows for transcriptional suppression in early embryos, but not in oocytes. Also, together with oma-2, is involved in P-granule distribution during embryonic development. The chain is CCCH-type zinc finger protein oma-1 from Caenorhabditis elegans.